We begin with the raw amino-acid sequence, 334 residues long: Biotin synthase (334 aa).

The Radical SAM core domain occupies threonine 41 to arginine 260. Cysteine 56, cysteine 60, and cysteine 63 together coordinate [4Fe-4S] cluster. Residues cysteine 100, cysteine 131, cysteine 191, and arginine 264 each contribute to the [2Fe-2S] cluster site.

Belongs to the radical SAM superfamily. Biotin synthase family. As to quaternary structure, homodimer. The cofactor is [4Fe-4S] cluster. Requires [2Fe-2S] cluster as cofactor.

It catalyses the reaction (4R,5S)-dethiobiotin + (sulfur carrier)-SH + 2 reduced [2Fe-2S]-[ferredoxin] + 2 S-adenosyl-L-methionine = (sulfur carrier)-H + biotin + 2 5'-deoxyadenosine + 2 L-methionine + 2 oxidized [2Fe-2S]-[ferredoxin]. It participates in cofactor biosynthesis; biotin biosynthesis; biotin from 7,8-diaminononanoate: step 2/2. Functionally, catalyzes the conversion of dethiobiotin (DTB) to biotin by the insertion of a sulfur atom into dethiobiotin via a radical-based mechanism. The polypeptide is Biotin synthase (Bradyrhizobium sp. (strain ORS 278)).